The following is a 497-amino-acid chain: uncharacterized protein (497 aa).

The tract at residues 58–79 is disordered; sequence ISTRSFRNDGNDSDPQTLDPDA. Helical transmembrane passes span 86–106, 120–140, 155–175, 180–200, 222–242, 258–278, 309–329, 348–368, 378–398, 407–427, 438–458, and 468–488; these read IAFV…ALPI, FSGL…YPML, FRPL…YSLA, WLYL…MFLY, LNIL…GLLA, VGSW…SIFF, FMLV…AGYQ, GNFL…STFL, MLYG…LDVL, FVLY…LISL, ILVG…GAIC, and VGFI…LLFL.

The protein belongs to the major facilitator superfamily.

Its subcellular location is the membrane. This is an uncharacterized protein from Schizosaccharomyces pombe (strain 972 / ATCC 24843) (Fission yeast).